A 777-amino-acid polypeptide reads, in one-letter code: Ribosome-releasing factor 2, mitochondrial (777 aa).

The tr-type G domain maps to 68-353 (AKIRNIGIMA…AITMYLPSPE (286 aa)). Residues 77–84 (AHIDAGKT), 141–145 (DTPGH), and 195–198 (NKMD) contribute to the GTP site.

Belongs to the TRAFAC class translation factor GTPase superfamily. Classic translation factor GTPase family. EF-G/EF-2 subfamily.

The protein resides in the mitochondrion. The catalysed reaction is GTP + H2O = GDP + phosphate + H(+). Its function is as follows. Mitochondrial GTPase that mediates the disassembly of ribosomes from messenger RNA at the termination of mitochondrial protein biosynthesis. Acts in collaboration with MRRF. GTP hydrolysis follows the ribosome disassembly and probably occurs on the ribosome large subunit. Not involved in the GTP-dependent ribosomal translocation step during translation elongation. The sequence is that of Ribosome-releasing factor 2, mitochondrial from Bos taurus (Bovine).